Consider the following 263-residue polypeptide: ATP synthase subunit delta (263 aa).

This sequence belongs to the ATPase delta chain family. In terms of assembly, F-type ATPases have 2 components, F(1) - the catalytic core - and F(0) - the membrane proton channel. F(1) has five subunits: alpha(3), beta(3), gamma(1), delta(1), epsilon(1). F(0) has three main subunits: a(1), b(2) and c(10-14). The alpha and beta chains form an alternating ring which encloses part of the gamma chain. F(1) is attached to F(0) by a central stalk formed by the gamma and epsilon chains, while a peripheral stalk is formed by the delta and b chains.

The protein resides in the cell membrane. In terms of biological role, f(1)F(0) ATP synthase produces ATP from ADP in the presence of a proton or sodium gradient. F-type ATPases consist of two structural domains, F(1) containing the extramembraneous catalytic core and F(0) containing the membrane proton channel, linked together by a central stalk and a peripheral stalk. During catalysis, ATP synthesis in the catalytic domain of F(1) is coupled via a rotary mechanism of the central stalk subunits to proton translocation. Its function is as follows. This protein is part of the stalk that links CF(0) to CF(1). It either transmits conformational changes from CF(0) to CF(1) or is implicated in proton conduction. In Leifsonia xyli subsp. xyli (strain CTCB07), this protein is ATP synthase subunit delta.